Reading from the N-terminus, the 194-residue chain is ATP-dependent Clp protease proteolytic subunit (194 aa).

The active-site Nucleophile is the Ser-98. Residue His-123 is part of the active site.

It belongs to the peptidase S14 family. In terms of assembly, fourteen ClpP subunits assemble into 2 heptameric rings which stack back to back to give a disk-like structure with a central cavity, resembling the structure of eukaryotic proteasomes.

It is found in the cytoplasm. The catalysed reaction is Hydrolysis of proteins to small peptides in the presence of ATP and magnesium. alpha-casein is the usual test substrate. In the absence of ATP, only oligopeptides shorter than five residues are hydrolyzed (such as succinyl-Leu-Tyr-|-NHMec, and Leu-Tyr-Leu-|-Tyr-Trp, in which cleavage of the -Tyr-|-Leu- and -Tyr-|-Trp bonds also occurs).. Functionally, cleaves peptides in various proteins in a process that requires ATP hydrolysis. Has a chymotrypsin-like activity. Plays a major role in the degradation of misfolded proteins. This chain is ATP-dependent Clp protease proteolytic subunit, found in Clostridium botulinum (strain Hall / ATCC 3502 / NCTC 13319 / Type A).